The following is a 173-amino-acid chain: uncharacterized protein (173 aa).

A run of 4 helical transmembrane segments spans residues 13 to 35, 50 to 72, 107 to 129, and 139 to 161; these read LQVILKFFFALLCFCIILFPLLS, IIFIYYFMSLYSLNIFSIFFLGL, NYLINFVVFCFYCLFILNFKYLL, and GYLIIFFQSLTTIFSYNIIRLIL.

It localises to the cell membrane. This is an uncharacterized protein from Rickettsia prowazekii (strain Madrid E).